A 55-amino-acid polypeptide reads, in one-letter code: Photosystem II reaction center protein K (55 aa).

Residues 1-18 (MFYIHLENTFDLSSTILV) constitute a propeptide that is removed on maturation. A helical membrane pass occupies residues 26 to 46 (IFDPIVDVMPIIPLFFFLLAF).

The protein belongs to the PsbK family. As to quaternary structure, PSII is composed of 1 copy each of membrane proteins PsbA, PsbB, PsbC, PsbD, PsbE, PsbF, PsbH, PsbI, PsbJ, PsbK, PsbL, PsbM, PsbT, PsbX, PsbY, PsbZ, Psb30/Ycf12, at least 3 peripheral proteins of the oxygen-evolving complex and a large number of cofactors. It forms dimeric complexes.

It is found in the plastid. It localises to the chloroplast thylakoid membrane. In terms of biological role, one of the components of the core complex of photosystem II (PSII). PSII is a light-driven water:plastoquinone oxidoreductase that uses light energy to abstract electrons from H(2)O, generating O(2) and a proton gradient subsequently used for ATP formation. It consists of a core antenna complex that captures photons, and an electron transfer chain that converts photonic excitation into a charge separation. In Anthoceros angustus (Hornwort), this protein is Photosystem II reaction center protein K.